We begin with the raw amino-acid sequence, 985 residues long: MELNVLLLLLCLSGGQVGAVEETLMDTRTATAELGWTANPSSGWEEVSGYDENLNTIRTYQVCNVFGPKQNNWLLTTFIPRRGAHRVYVEMRFTVRDCSSLPNVPGSCKETFNLYYYETDSNIENKISTFWNESPYLKVDTIAADESFSQVDFGGRLMKVNTEVRSFGPLTRSGFYLAFQDYGACMSLLSVRVFFKEMPSVVQNLLVFPETMTGAESTSLVIARGTCIPNAEEVDVPIKLYCNGDGEWMVPIGKCTCKAGYEPENHVVCKACPAAMFKANQGMGICAQCPANSRSTSEASPICICRNGYYRADFDTPEAPCTSVPSGPRNVISIVNETAITLEWHPPRETGGRDDVDYNIVCKKCRADRRACSRCDDNVDFVPRQLGLTDTRVFISNLWAHTPYTFETQAVNGVTNKSPFPPQHVSVNITTNQAAPSSVPIMHQVKATMKSITLSWPQQEQPNGIILDYEIRYYEKDHHEFNSSLARSQTNTARRTGGRVWMFMSVQVRARTVAGYGKFSSKCGFQTLTAEDYKSELREQLPLTGSAAAGVVFIVSLVAISIVCSRKRTYSKEAVYSDKLQHYSTGRGSPGMKIYIDPFTYEDPNEAVREFAKEIDVSFVKIEEVIGAGEFGEVYKGRLKLPSKREISVAIKTLKAGYSEKQRRDFLSEASIMGQFDHPNIIRLEGVVTKSRPVMIITEFMENGALDSFLRQNDGQFTVIQLVGMLRGIAAGMKYLSEMNYVHRDLAARNILVNSNLVCKVSDFGLSRYLQDDTSDPTYTSSLGGKIPVRWTAQEAIAYRKFTSASDVWSYGIVMWEVMSYGERPYWTMSNQDVINAIEQDYRLPPPMDCPAALHQLMLDCWQKDRNSRPRLAEIVNTLRPMIRNPASLKTVATIPAVPSQPLLDRSIPDISAFTSVDDWLSAIKMGQYRDNFLSSGFTSLQLVAQMTSEDLLRIGITLAGHQKKILNSIQSMRVQITQSPTSIA.

Positions Met-1–Ala-19 are cleaved as a signal peptide. Over Val-20–Pro-542 the chain is Extracellular. Positions Glu-21–Gln-203 constitute an Eph LBD domain. Fibronectin type-III domains are found at residues Val-324–Ala-434 and Ala-435–Asp-532. N-linked (GlcNAc...) asparagine glycosylation is found at Asn-336, Asn-428, and Asn-482. The chain crosses the membrane as a helical span at residues Leu-543 to Val-563. The Cytoplasmic portion of the chain corresponds to Cys-564–Ala-985. The 264-residue stretch at Val-620–Ile-883 folds into the Protein kinase domain. Residues Ile-626–Val-634 and Lys-652 contribute to the ATP site. The active-site Proton acceptor is the Asp-745. Positions Ser-912–Gln-976 constitute an SAM domain. The PDZ-binding signature appears at Ser-983–Ala-985.

This sequence belongs to the protein kinase superfamily. Tyr protein kinase family. Ephrin receptor subfamily. In terms of assembly, heterotetramer upon binding of the ligand. The heterotetramer is composed of an ephrin dimer and a receptor dimer. Oligomerization is probably required to induce biological responses. In terms of processing, phosphorylated. Autophosphorylation is stimulated by ligands.

The protein resides in the cell membrane. It localises to the early endosome membrane. The protein localises to the cell projection. It is found in the dendrite. The enzyme catalyses L-tyrosyl-[protein] + ATP = O-phospho-L-tyrosyl-[protein] + ADP + H(+). Its function is as follows. Receptor tyrosine kinase which binds promiscuously transmembrane ephrin-B family ligands residing on adjacent cells, leading to contact-dependent bidirectional signaling into neighboring cells. The signaling pathway downstream of the receptor is referred to as forward signaling while the signaling pathway downstream of the ephrin ligand is referred to as reverse signaling. May play a role in axon guidance during nervous system development. May also play an important redundant role with other ephrin-B receptors in development and maturation of dendritic spines and synapse formation. More generally, may play a role in targeted cell migration and adhesion. Upon activation by ephrin-B ligands activates the MAPK/ERK and the JNK signaling cascades to regulate cell migration and adhesion respectively. This Xenopus laevis (African clawed frog) protein is Ephrin type-B receptor 1-A (ephb1-a).